The chain runs to 503 residues: Maturase K (503 aa).

The protein belongs to the intron maturase 2 family. MatK subfamily.

The protein resides in the plastid. The protein localises to the chloroplast. In terms of biological role, usually encoded in the trnK tRNA gene intron. Probably assists in splicing its own and other chloroplast group II introns. This is Maturase K from Diospyros kaki (Kaki persimmon).